Here is a 22-residue protein sequence, read N- to C-terminus: Mu-conotoxin CnIIIA (22 aa).

Disulfide bonds link cysteine 3–cysteine 15, cysteine 4–cysteine 21, and cysteine 10–cysteine 22. Residue cysteine 22 is modified to Cysteine amide.

Belongs to the conotoxin M superfamily. In terms of tissue distribution, expressed by the venom duct. Has not been isolated from the crude venom.

It localises to the secreted. Mu-conotoxins block voltage-gated sodium channels (Nav). This synthetic toxin moderately blocks rNav1.1/SCN1A, rNav1.2/SCN2A, rNav1.3/SCN3A, rNav1.4/SCN4A, rNav1.5/SCN5A, and mNav1.6/SCN8A. This block is very slowly reversible. Causes seizures when injected intracranially into mice. This is Mu-conotoxin CnIIIA from Conus consors (Singed cone).